The following is a 453-amino-acid chain: MTTDTIVAQATAPGRGGVGIIRISGDKASNVAMAVLGHLPKTRYADYCDFKSASGQVIDQGIALFFKGPNSFTGEDVLELQGHGGQIVLDMLIKRVMEVGGIRIAKPGEFSEQAFMNDKLDLTQAEAIADLIDATCEQAAKSALQSLQGEFSKEVHELVDQVTNLRLYVEAAIDFPDEEVDFLSDGKIANALYKIIDKLDLVQASAKQGSIIREGMKVVIAGRPNAGKSSLLNALAGKESAIVTEIAGTTRDVLREHIHLDGMPLHIIDTAGLRDTTDTVEQIGIERAWNEINSADRVLFMVDGTTTAAVDPHAIWPDFVDRLPSNLGVTVIRNKADLTGEDLMMTEEQGYSVYRISAKTGLGVEELKQHLKSLMGYQSNLEGGFIARRRHLEALELAAGHLQLGKEQLEVYLAGELLAEELRMCQLALSEITGRFTSDDLLGKIFSSFCIGK.

Positions 22, 79, and 119 each coordinate (6S)-5-formyl-5,6,7,8-tetrahydrofolate. The 162-residue stretch at 215–376 (GMKVVIAGRP…LKQHLKSLMG (162 aa)) folds into the TrmE-type G domain. Residue Asn-225 coordinates K(+). Residues 225-230 (NAGKSS), 244-250 (TEIAGTT), 269-272 (DTAG), and 334-337 (NKAD) each bind GTP. Residue Ser-229 coordinates Mg(2+). Positions 244, 246, and 249 each coordinate K(+). A Mg(2+)-binding site is contributed by Thr-250. Lys-453 contributes to the (6S)-5-formyl-5,6,7,8-tetrahydrofolate binding site.

It belongs to the TRAFAC class TrmE-Era-EngA-EngB-Septin-like GTPase superfamily. TrmE GTPase family. In terms of assembly, homodimer. Heterotetramer of two MnmE and two MnmG subunits. The cofactor is K(+).

The protein resides in the cytoplasm. Its function is as follows. Exhibits a very high intrinsic GTPase hydrolysis rate. Involved in the addition of a carboxymethylaminomethyl (cmnm) group at the wobble position (U34) of certain tRNAs, forming tRNA-cmnm(5)s(2)U34. The sequence is that of tRNA modification GTPase MnmE from Shewanella baltica (strain OS155 / ATCC BAA-1091).